Here is a 200-residue protein sequence, read N- to C-terminus: MIAKLKGLLDETGTDWAVIDVSGVGYLVHCSSKSLAALGEVGEACTVYTDLQVSENDMRLLGFAEASERDWFRLLTQVQGVGSKVALAILSALSTEEVQTACANGDAAMVARAQGVGPKLAGRIVNELKDKAGALPSAPGGAAMAANPAGGASADAVSALENLGFKPAIAARAVATAQGELGEGASESELIRVALKRAAG.

Residues 1 to 64 (MIAKLKGLLD…ENDMRLLGFA (64 aa)) are domain I. Residues 65-143 (EASERDWFRL…ALPSAPGGAA (79 aa)) are domain II. The interval 144-154 (MAANPAGGASA) is flexible linker. Residues 154–200 (ADAVSALENLGFKPAIAARAVATAQGELGEGASESELIRVALKRAAG) form a domain III region.

It belongs to the RuvA family. As to quaternary structure, homotetramer. Forms an RuvA(8)-RuvB(12)-Holliday junction (HJ) complex. HJ DNA is sandwiched between 2 RuvA tetramers; dsDNA enters through RuvA and exits via RuvB. An RuvB hexamer assembles on each DNA strand where it exits the tetramer. Each RuvB hexamer is contacted by two RuvA subunits (via domain III) on 2 adjacent RuvB subunits; this complex drives branch migration. In the full resolvosome a probable DNA-RuvA(4)-RuvB(12)-RuvC(2) complex forms which resolves the HJ.

The protein localises to the cytoplasm. The RuvA-RuvB-RuvC complex processes Holliday junction (HJ) DNA during genetic recombination and DNA repair, while the RuvA-RuvB complex plays an important role in the rescue of blocked DNA replication forks via replication fork reversal (RFR). RuvA specifically binds to HJ cruciform DNA, conferring on it an open structure. The RuvB hexamer acts as an ATP-dependent pump, pulling dsDNA into and through the RuvAB complex. HJ branch migration allows RuvC to scan DNA until it finds its consensus sequence, where it cleaves and resolves the cruciform DNA. This Erythrobacter litoralis (strain HTCC2594) protein is Holliday junction branch migration complex subunit RuvA.